Here is a 473-residue protein sequence, read N- to C-terminus: 3-isopropylmalate dehydratase large subunit (473 aa).

The segment at 289–319 (TVTWGTTPGQTAGITEPIPDPDDLPEEDRDT) is disordered. A compositionally biased stretch (polar residues) spans 291–301 (TWGTTPGQTAG). Acidic residues predominate over residues 307 to 317 (PDPDDLPEEDR). Residues Cys-348, Cys-408, and Cys-411 each contribute to the [4Fe-4S] cluster site.

The protein belongs to the aconitase/IPM isomerase family. LeuC type 1 subfamily. As to quaternary structure, heterodimer of LeuC and LeuD. The cofactor is [4Fe-4S] cluster.

It carries out the reaction (2R,3S)-3-isopropylmalate = (2S)-2-isopropylmalate. Its pathway is amino-acid biosynthesis; L-leucine biosynthesis; L-leucine from 3-methyl-2-oxobutanoate: step 2/4. Functionally, catalyzes the isomerization between 2-isopropylmalate and 3-isopropylmalate, via the formation of 2-isopropylmaleate. The polypeptide is 3-isopropylmalate dehydratase large subunit (Halorubrum lacusprofundi (strain ATCC 49239 / DSM 5036 / JCM 8891 / ACAM 34)).